The chain runs to 656 residues: MLLPRIPQLSHATRAAYVAAKSPFSPVPVRPFHASAALRAIDMAKVDTTHRLAELRKLMKERNVDIYMVPSEDSHQSEYIAPCDARRAYISGFTGSAGYAVITHEKAALSTDGRYFNQAEKQLDSNWELLKQGIQDVPTIQQWTADQAGGGKVVGVDPSVVTAGDARKLAEKIKKKGGEYKAIDENLVDLVWGSERPARPSEKVIVQPKKYAGKGFEDKIDDLRKELEKKKSLGFVVSMLDEVAWLFNLRGSDIPYNPVFFSYAVVTPTTATLYVDENKLPEDVKEHLGDKITIRPYEAIFGDVTALSKELFEANDKNETQKKFLTSNTASWALNKALGGDDKVEETRSPVGDSKAVKNEVELEGMRQCHIRDGAALSEYFAWLEDQLINKKATLDEVDGADKLEEIRKKHDMFMGLSFDTISSTGANAAVIHYKPEKGECATIDSKAIYLCDSGAQYRDGTTDTTRTLHFTEPTEMERKAYTLVLKGNMALERVKFPKGTTGFALDALARQFLWAEGLDYRHGTGHGVGSFLNVHEGPIGIGTRVQYSEVSLAVGNVVSDEPGYYEDGKFGIRIENMVMVKEVETKHKFGDKPYLGFEHVTMTPYCRNLVDMKLLTEDEKKFINDYHKEVYEKTSKYFDKDALTLEWLKRETAPY.

Asp-453, Asp-464, Glu-562, and Glu-576 together coordinate Mn(2+).

The protein belongs to the peptidase M24B family. Requires Mn(2+) as cofactor.

The catalysed reaction is Release of any N-terminal amino acid, including proline, that is linked to proline, even from a dipeptide or tripeptide.. In terms of biological role, catalyzes the removal of a penultimate prolyl residue from the N-termini of peptides. The polypeptide is Probable Xaa-Pro aminopeptidase P (ampp) (Pyrenophora teres f. teres (strain 0-1) (Barley net blotch fungus)).